Consider the following 361-residue polypeptide: 3-dehydroquinate synthase (361 aa).

It belongs to the archaeal-type DHQ synthase family.

The enzyme catalyses 2-amino-2,3,7-trideoxy-D-lyxo-hept-6-ulosonate + NAD(+) + H2O = 3-dehydroquinate + NH4(+) + NADH + H(+). In terms of biological role, catalyzes the oxidative deamination and cyclization of 2-amino-3,7-dideoxy-D-threo-hept-6-ulosonic acid (ADH) to yield 3-dehydroquinate (DHQ), which is fed into the canonical shikimic pathway of aromatic amino acid biosynthesis. The chain is 3-dehydroquinate synthase (aroB') from Methanocaldococcus jannaschii (strain ATCC 43067 / DSM 2661 / JAL-1 / JCM 10045 / NBRC 100440) (Methanococcus jannaschii).